The chain runs to 393 residues: MTTYSDKGAKPERGRFLHFHSVTFWVGNAKQATSFYCSKMGFEPLAYRGLETGSREVVSHVIKQGKIVFVLSSALNPWNKEMGDHLVKHGDGVKDIAFEVEDCDYIVQKARERGAKIMREPWVEQDKFGKVKFAVLQTYGDTTHTLVEKMNYIGQFLPGYEAPAFMDPLLPKLPKCSLEMIDHIVGNQPDQEMVSASEWYLKNLQFHRFWSVDDTQVHTEYSSLRSIVVANYEESIKMPINEPAPGKKKSQIQEYVDYNGGAGVQHIALKTEDIITAIRHLRERGLEFLSVPSTYYKQLREKLKTAKIKVKENIDALEELKILVDYDEKGYLLQIFTKPVQDRPTLFLEVIQRHNHQGFGAGNFNSLFKAFEEEQNLRGNLTNMETNGVVPGM.

Threonine 2 bears the N-acetylthreonine mark. VOC domains follow at residues 18–149 (HFHS…LVEK) and 180–338 (MIDH…IFTK). Lysine 132 carries the N6-succinyllysine modification. Fe cation is bound at residue histidine 183. A phosphoserine mark is found at serine 211, serine 226, and serine 250. 2 residues coordinate Fe cation: histidine 266 and glutamate 349.

The protein belongs to the 4HPPD family. Homodimer. Fe cation serves as cofactor.

The protein localises to the cytoplasm. Its subcellular location is the endoplasmic reticulum membrane. It localises to the golgi apparatus membrane. The catalysed reaction is 3-(4-hydroxyphenyl)pyruvate + O2 = homogentisate + CO2. It participates in amino-acid degradation; L-phenylalanine degradation; acetoacetate and fumarate from L-phenylalanine: step 3/6. Its function is as follows. Catalyzes the conversion of 4-hydroxyphenylpyruvic acid to homogentisic acid, one of the steps in tyrosine catabolism. This chain is 4-hydroxyphenylpyruvate dioxygenase (HPD), found in Homo sapiens (Human).